The chain runs to 166 residues: Endoribonuclease YbeY (166 aa).

Residues H111, H115, and H121 each coordinate Zn(2+). Positions 141–166 are disordered; the sequence is LGYPDPYAEDESADHPHSDTPSKDHE. Over residues 153–166 the composition is skewed to basic and acidic residues; the sequence is ADHPHSDTPSKDHE.

It belongs to the endoribonuclease YbeY family. It depends on Zn(2+) as a cofactor.

It is found in the cytoplasm. Its function is as follows. Single strand-specific metallo-endoribonuclease involved in late-stage 70S ribosome quality control and in maturation of the 3' terminus of the 16S rRNA. This is Endoribonuclease YbeY from Pseudomonas savastanoi pv. phaseolicola (strain 1448A / Race 6) (Pseudomonas syringae pv. phaseolicola (strain 1448A / Race 6)).